A 527-amino-acid polypeptide reads, in one-letter code: Aspartokinase (527 aa).

Thr333 carries the phosphothreonine modification. The ACT domain occupies 442–527 (LVGKHMKQYI…RLEQLKRLGI (86 aa)).

It belongs to the aspartokinase family. As to quaternary structure, homohexamer. Interacts with FPR1; the interaction is direct, plays a role in feedback inhibition of aspartokinase by threonine, and inhibited by tacrolimus and sirolimus.

The enzyme catalyses L-aspartate + ATP = 4-phospho-L-aspartate + ADP. It functions in the pathway amino-acid biosynthesis; L-methionine biosynthesis via de novo pathway; L-homoserine from L-aspartate: step 1/3. The protein operates within amino-acid biosynthesis; L-threonine biosynthesis; L-threonine from L-aspartate: step 1/5. Its activity is regulated as follows. Allosterically inhibited by threonine. Phosphorylates aspartate, the first step in the biosynthesis of amino acids that derive from aspartate (the aspartate family of amino acids), including methioinine and threonine, the latter of which is a precursor to isoleucine. The sequence is that of Aspartokinase (HOM3) from Saccharomyces cerevisiae (strain ATCC 204508 / S288c) (Baker's yeast).